A 327-amino-acid polypeptide reads, in one-letter code: Movement protein (327 aa).

A coiled-coil region spans residues 297–327 (SASSSNTENELARVSQNIDLLKNKLKEICGE).

This sequence belongs to the caulimoviridae movement protein family. In terms of assembly, homotrimer, through the coiled-coil domain. Interacts with VAP. May interact (via N-terminus) with host prenylated Rab acceptor protein 1D (PRA1D).

It is found in the host cell junction. Its subcellular location is the host plasmodesma. In terms of biological role, transports viral genome to neighboring plant cells directly through plasmosdesmata, without any budding. The movement protein allows efficient cell to cell propagation, by bypassing the host cell wall barrier. Acts by forming tubules structures that increase the size exclusion limit (SEL) of plasmodesmata, thereby allowing viral ribonucleocapsids to spread directly to neighboring cells. In Cauliflower mosaic virus (strain W260) (CaMV), this protein is Movement protein.